Here is a 221-residue protein sequence, read N- to C-terminus: Vesicle-associated membrane protein 713 (221 aa).

Ala2 carries the N-acetylalanine modification. Residues 2–190 (AIIFALVARG…RTIMWWRNVK (189 aa)) are Cytoplasmic-facing. Residues 7–112 (LVARGTVVLS…SMNDEFSRVL (106 aa)) form the Longin domain. A v-SNARE coiled-coil homology domain is found at 127–187 (RMSRIKGEMS…RRYRTIMWWR (61 aa)). The chain crosses the membrane as a helical; Anchor for type IV membrane protein span at residues 191 to 211 (LTIALILVLALVVYIAMAFVC). Over 212–221 (HGPSLPSCFK) the chain is Vesicular.

It belongs to the synaptobrevin family. In terms of assembly, interacts with subunits of the vacuole protein sorting (HOPS) complex including VPS11, VCL1, VPS18, VPS33, VPS39 and VPS41. In terms of tissue distribution, highly expressed in stems and roots. Detected in flowers and leaves.

The protein localises to the vacuole membrane. The protein resides in the prevacuolar compartment membrane. In terms of biological role, involved in the targeting and/or fusion of transport vesicles to their target membrane. The polypeptide is Vesicle-associated membrane protein 713 (Arabidopsis thaliana (Mouse-ear cress)).